The sequence spans 81 residues: Photosystem I iron-sulfur center (81 aa).

4Fe-4S ferredoxin-type domains are found at residues 2–31 (SHSV…MVPW) and 39–68 (IAAS…IRVY). Residues cysteine 11, cysteine 14, cysteine 17, cysteine 21, cysteine 48, cysteine 51, cysteine 54, and cysteine 58 each contribute to the [4Fe-4S] cluster site.

As to quaternary structure, the cyanobacterial PSI reaction center is composed of one copy each of PsaA,B,C,D,E,F,I,J,K,L,M and X, and forms trimeric complexes. The cofactor is [4Fe-4S] cluster.

It localises to the cellular thylakoid membrane. The catalysed reaction is reduced [plastocyanin] + hnu + oxidized [2Fe-2S]-[ferredoxin] = oxidized [plastocyanin] + reduced [2Fe-2S]-[ferredoxin]. Apoprotein for the two 4Fe-4S centers FA and FB of photosystem I (PSI); essential for photochemical activity. FB is the terminal electron acceptor of PSI, donating electrons to ferredoxin. The C-terminus interacts with PsaA/B/D and helps assemble the protein into the PSI complex. Required for binding of PsaD and PsaE to PSI. PSI is a plastocyanin/cytochrome c6-ferredoxin oxidoreductase, converting photonic excitation into a charge separation, which transfers an electron from the donor P700 chlorophyll pair to the spectroscopically characterized acceptors A0, A1, FX, FA and FB in turn. The sequence is that of Photosystem I iron-sulfur center from Synechococcus elongatus (strain ATCC 33912 / PCC 7942 / FACHB-805) (Anacystis nidulans R2).